The chain runs to 375 residues: Trichodiene synthase (375 aa).

It belongs to the trichodiene synthase family.

It carries out the reaction (2E,6E)-farnesyl diphosphate = trichodiene + diphosphate. It functions in the pathway sesquiterpene biosynthesis; trichothecene biosynthesis. TS is a member of the terpene cyclase group of enzymes. It catalyzes the isomerization and cyclization of farnesyl pyro-phosphate to form trichodiene, the first cyclic intermediate in the biosynthetic pathway for trichothecenes. It serves to branch trichothecene biosynthesis from the isoprenoid pathway. The polypeptide is Trichodiene synthase (TRI5) (Fusarium asiaticum).